Here is a 100-residue protein sequence, read N- to C-terminus: Co-chaperonin GroES (100 aa).

This sequence belongs to the GroES chaperonin family. Heptamer of 7 subunits arranged in a ring. Interacts with the chaperonin GroEL.

It is found in the cytoplasm. Together with the chaperonin GroEL, plays an essential role in assisting protein folding. The GroEL-GroES system forms a nano-cage that allows encapsulation of the non-native substrate proteins and provides a physical environment optimized to promote and accelerate protein folding. GroES binds to the apical surface of the GroEL ring, thereby capping the opening of the GroEL channel. The protein is Co-chaperonin GroES of Mycolicibacterium paratuberculosis (strain ATCC BAA-968 / K-10) (Mycobacterium paratuberculosis).